Consider the following 439-residue polypeptide: Serine/threonine-protein kinase 2 (439 aa).

In terms of domain architecture, Protein kinase spans 87-439 (NDDFYHISTG…IFSDWINGGN (353 aa)). ATP contacts are provided by residues 93–101 (ISTGGYGIV) and Lys117. The active-site Proton acceptor is Asp307.

This sequence belongs to the protein kinase superfamily. Ser/Thr protein kinase family. Phosphorylated in vivo. Autophosphorylated in vitro.

The protein resides in the host endoplasmic reticulum. The protein localises to the host endoplasmic reticulum-Golgi intermediate compartment. The enzyme catalyses L-seryl-[protein] + ATP = O-phospho-L-seryl-[protein] + ADP + H(+). The catalysed reaction is L-threonyl-[protein] + ATP = O-phospho-L-threonyl-[protein] + ADP + H(+). Essential serine-protein kinase involved in the early stage of virion morphogenesis. This Vaccinia virus (strain Tian Tan) (VACV) protein is Serine/threonine-protein kinase 2 (OPG054).